A 93-amino-acid chain; its full sequence is ATP-dependent Clp protease adapter protein ClpS (93 aa).

This sequence belongs to the ClpS family. Binds to the N-terminal domain of the chaperone ClpA.

In terms of biological role, involved in the modulation of the specificity of the ClpAP-mediated ATP-dependent protein degradation. This is ATP-dependent Clp protease adapter protein ClpS from Gloeobacter violaceus (strain ATCC 29082 / PCC 7421).